Consider the following 365-residue polypeptide: Pectate trisaccharide-lyase (365 aa).

A signal peptide spans 1–25; it reads MRFSRVVSLVLLLVFTAVLTGAVKA. The Ca(2+) site is built by aspartate 142, aspartate 164, and aspartate 168. A PbH1 1 repeat occupies 149 to 171; sequence SHHIWIDHCTFVNGNDGAVDIKK. Arginine 222 is an active-site residue. Residues 261 to 287 form a PbH1 2 repeat; sequence GAKVHVEGNYFMGYGAVMAEAGIAFLP.

It belongs to the polysaccharide lyase 1 family. In terms of assembly, homotetramer. Ca(2+) serves as cofactor.

It is found in the secreted. The catalysed reaction is eliminative cleavage of unsaturated trigalacturonate as the major product from the reducing end of polygalacturonic acid/pectate.. Functionally, cleaves unsaturated trigalacturonate from pectin. Activity is highest towards polygalacturonic acid, activity on methylated pectins decreases with an increasing degree of methylation. The chain is Pectate trisaccharide-lyase from Thermotoga sp. (strain RQ2).